We begin with the raw amino-acid sequence, 294 residues long: Large ribosomal subunit protein uL4m (294 aa).

The segment at 119 to 139 (EVSGGGRKPWQQKGSGRARHG) is disordered. Arg147 carries the omega-N-methylarginine modification.

Belongs to the universal ribosomal protein uL4 family. Component of the mitochondrial ribosome large subunit (39S) which comprises a 16S rRNA and about 50 distinct proteins. Interacts with MIEF1 upstream open reading frame protein.

It is found in the mitochondrion. This chain is Large ribosomal subunit protein uL4m (Mrpl4), found in Mus musculus (Mouse).